Consider the following 133-residue polypeptide: Small ribosomal subunit protein eS24 (133 aa).

Position 1 is an N-acetylmethionine (methionine 1). Threonine 9 carries the phosphothreonine modification. A Glycyl lysine isopeptide (Lys-Gly) (interchain with G-Cter in SUMO2) cross-link involves residue lysine 37. The tract at residues 92–133 (ARHGLYEKKKTSRKQRKERKNRMKKVRGTAKANVGAGKKPKE) is disordered. A compositionally biased stretch (basic residues) spans 101–119 (KTSRKQRKERKNRMKKVRG).

Belongs to the eukaryotic ribosomal protein eS24 family. In terms of assembly, component of the small ribosomal subunit. Part of the small subunit (SSU) processome, composed of more than 70 proteins and the RNA chaperone small nucleolar RNA (snoRNA) U3.

It localises to the cytoplasm. The protein localises to the nucleus. It is found in the nucleolus. In terms of biological role, component of the small ribosomal subunit. The ribosome is a large ribonucleoprotein complex responsible for the synthesis of proteins in the cell. Required for processing of pre-rRNA and maturation of 40S ribosomal subunits. Part of the small subunit (SSU) processome, first precursor of the small eukaryotic ribosomal subunit. During the assembly of the SSU processome in the nucleolus, many ribosome biogenesis factors, an RNA chaperone and ribosomal proteins associate with the nascent pre-rRNA and work in concert to generate RNA folding, modifications, rearrangements and cleavage as well as targeted degradation of pre-ribosomal RNA by the RNA exosome. This is Small ribosomal subunit protein eS24 (RPS24) from Oryctolagus cuniculus (Rabbit).